The primary structure comprises 140 residues: 6,7-dimethyl-8-ribityllumazine synthase (140 aa).

Residues Phe11, Ser43–Asp45, and Cys67–Ile69 contribute to the 5-amino-6-(D-ribitylamino)uracil site. (2S)-2-hydroxy-3-oxobutyl phosphate is bound at residue Asp72 to Thr73. Catalysis depends on His75, which acts as the Proton donor. Leu100 provides a ligand contact to 5-amino-6-(D-ribitylamino)uracil. A (2S)-2-hydroxy-3-oxobutyl phosphate-binding site is contributed by Arg115.

The protein belongs to the DMRL synthase family. In terms of assembly, forms an icosahedral capsid composed of 60 subunits, arranged as a dodecamer of pentamers.

The enzyme catalyses (2S)-2-hydroxy-3-oxobutyl phosphate + 5-amino-6-(D-ribitylamino)uracil = 6,7-dimethyl-8-(1-D-ribityl)lumazine + phosphate + 2 H2O + H(+). Its pathway is cofactor biosynthesis; riboflavin biosynthesis; riboflavin from 2-hydroxy-3-oxobutyl phosphate and 5-amino-6-(D-ribitylamino)uracil: step 1/2. Its function is as follows. Catalyzes the formation of 6,7-dimethyl-8-ribityllumazine by condensation of 5-amino-6-(D-ribitylamino)uracil with 3,4-dihydroxy-2-butanone 4-phosphate. This is the penultimate step in the biosynthesis of riboflavin. The chain is 6,7-dimethyl-8-ribityllumazine synthase from Methanococcus vannielii (strain ATCC 35089 / DSM 1224 / JCM 13029 / OCM 148 / SB).